Consider the following 273-residue polypeptide: Ribosomal RNA small subunit methyltransferase A (273 aa).

S-adenosyl-L-methionine contacts are provided by Asn18, Leu20, Gly45, Glu66, Asp91, and Asn113.

This sequence belongs to the class I-like SAM-binding methyltransferase superfamily. rRNA adenine N(6)-methyltransferase family. RsmA subfamily.

The protein resides in the cytoplasm. The catalysed reaction is adenosine(1518)/adenosine(1519) in 16S rRNA + 4 S-adenosyl-L-methionine = N(6)-dimethyladenosine(1518)/N(6)-dimethyladenosine(1519) in 16S rRNA + 4 S-adenosyl-L-homocysteine + 4 H(+). Its function is as follows. Specifically dimethylates two adjacent adenosines (A1518 and A1519) in the loop of a conserved hairpin near the 3'-end of 16S rRNA in the 30S particle. May play a critical role in biogenesis of 30S subunits. In Cronobacter sakazakii (strain ATCC BAA-894) (Enterobacter sakazakii), this protein is Ribosomal RNA small subunit methyltransferase A.